The primary structure comprises 311 residues: Aspartate carbamoyltransferase catalytic subunit (311 aa).

Residues arginine 55 and threonine 56 each contribute to the carbamoyl phosphate site. Lysine 85 serves as a coordination point for L-aspartate. The carbamoyl phosphate site is built by arginine 106, histidine 135, and glutamine 138. Positions 168 and 230 each coordinate L-aspartate. Carbamoyl phosphate-binding residues include leucine 268 and proline 269.

Belongs to the aspartate/ornithine carbamoyltransferase superfamily. ATCase family. Heterododecamer (2C3:3R2) of six catalytic PyrB chains organized as two trimers (C3), and six regulatory PyrI chains organized as three dimers (R2).

It catalyses the reaction carbamoyl phosphate + L-aspartate = N-carbamoyl-L-aspartate + phosphate + H(+). It participates in pyrimidine metabolism; UMP biosynthesis via de novo pathway; (S)-dihydroorotate from bicarbonate: step 2/3. Its function is as follows. Catalyzes the condensation of carbamoyl phosphate and aspartate to form carbamoyl aspartate and inorganic phosphate, the committed step in the de novo pyrimidine nucleotide biosynthesis pathway. This chain is Aspartate carbamoyltransferase catalytic subunit, found in Salmonella arizonae (strain ATCC BAA-731 / CDC346-86 / RSK2980).